We begin with the raw amino-acid sequence, 382 residues long: Lipid-A-disaccharide synthase (382 aa).

The protein belongs to the LpxB family.

It carries out the reaction 2-N,3-O-bis[(3R)-3-hydroxytetradecanoyl]-alpha-D-glucosaminyl 1-phosphate + UDP-2-N,3-O-bis[(3R)-3-hydroxytetradecanoyl]-alpha-D-glucosamine = lipid A disaccharide (E. coli) + UDP + H(+). The enzyme catalyses a lipid X + a UDP-2-N,3-O-bis[(3R)-3-hydroxyacyl]-alpha-D-glucosamine = a lipid A disaccharide + UDP + H(+). Its pathway is glycolipid biosynthesis; lipid IV(A) biosynthesis; lipid IV(A) from (3R)-3-hydroxytetradecanoyl-[acyl-carrier-protein] and UDP-N-acetyl-alpha-D-glucosamine: step 5/6. Condensation of UDP-2,3-diacylglucosamine and 2,3-diacylglucosamine-1-phosphate to form lipid A disaccharide, a precursor of lipid A, a phosphorylated glycolipid that anchors the lipopolysaccharide to the outer membrane of the cell. This Shigella flexneri serotype 5b (strain 8401) protein is Lipid-A-disaccharide synthase.